We begin with the raw amino-acid sequence, 599 residues long: Endo-1,4-beta-xylanase B (599 aa).

An N-terminal signal peptide occupies residues 1 to 37; the sequence is MTISASDYRHPGNFLKRTTALLCVGTALTALAFNASA. Residues 38–136 form the CBM2 domain; it reads ACTYTIDSEW…TVTGAACNSA (99 aa). A disulfide bond links Cys-39 and Cys-133. The CBM6 domain occupies 163 to 289; it reads LLQEAQAGFC…LPNIDSLSVV (127 aa). The 281-residue stretch at 315–595 folds into the GH10 domain; the sequence is SSSAASAKKF…RPAMTWLINN (281 aa). Glu-431 (proton donor) is an active-site residue. Residue Glu-530 is the Nucleophile of the active site.

The protein belongs to the glycosyl hydrolase 10 (cellulase F) family.

It carries out the reaction Endohydrolysis of (1-&gt;4)-beta-D-xylosidic linkages in xylans.. It functions in the pathway glycan metabolism; hemicellulose degradation. Its function is as follows. Xylanase B contributes to hydrolyze hemicellulose, the major component of plant cell-walls. The protein is Endo-1,4-beta-xylanase B (xynB) of Cellvibrio japonicus (strain Ueda107) (Pseudomonas fluorescens subsp. cellulosa).